Here is a 239-residue protein sequence, read N- to C-terminus: Large ribosomal subunit protein bL25 (239 aa).

Residues 217 to 239 (IKAEAHAAEGTQAEGSTEEGQQQ) form a disordered region. Residues 229 to 239 (AEGSTEEGQQQ) show a composition bias toward polar residues.

Belongs to the bacterial ribosomal protein bL25 family. CTC subfamily. As to quaternary structure, part of the 50S ribosomal subunit; part of the 5S rRNA/L5/L18/L25 subcomplex. Contacts the 5S rRNA. Binds to the 5S rRNA independently of L5 and L18.

This is one of the proteins that binds to the 5S RNA in the ribosome where it forms part of the central protuberance. This Deinococcus deserti (strain DSM 17065 / CIP 109153 / LMG 22923 / VCD115) protein is Large ribosomal subunit protein bL25.